We begin with the raw amino-acid sequence, 542 residues long: Probable folate-biopterin transporter 8, chloroplastic (542 aa).

Residues 1 to 78 constitute a chloroplast transit peptide; that stretch reads MERIMINPLL…GVSEFEETAR (78 aa). Residues 24-45 form a disordered region; that stretch reads LSSIHRQQQQQERQSNNNTLFM. The next 12 helical transmembrane spans lie at 103 to 123, 132 to 152, 155 to 175, 181 to 201, 223 to 243, 246 to 266, 308 to 328, 338 to 358, 369 to 389, 404 to 424, 446 to 466, and 477 to 497; these read FPWLALNFHMVHSLALQPSTL, LPMVAKPLYGVLSDVLYIGSG, VPYIAIGVFLQVLAWGSMGIF, VLPSLVACVLLSNLGASITEV, ALMASAAGGVLGNLLGGYLLL, PPKISFLVFSALLSLQLVVSL, LIWAVVSIAMVPLLSGSVFCY, SVIGMSKVIGQLMLLCLTVVY, PLIHIIQLLYGLSILLDYILV, VLCFSSLAEILAQFKILPFAV, LCLSQIVSAFLGVGLANLIGI, and GILIQSLAALAPLCFMHLVPM. A disordered region spans residues 506–542; that stretch reads GKRGISKRSRRNRRVGRVVDKESVTYRRERESEEAQR. Residues 509–521 are compositionally biased toward basic residues; that stretch reads GISKRSRRNRRVG. The span at 522–542 shows a compositional bias: basic and acidic residues; the sequence is RVVDKESVTYRRERESEEAQR.

This sequence belongs to the major facilitator superfamily. Folate-biopterin transporter (TC 2.A.71) family.

The protein localises to the plastid. Its subcellular location is the chloroplast membrane. Functionally, could mediate folate transport. The polypeptide is Probable folate-biopterin transporter 8, chloroplastic (Arabidopsis thaliana (Mouse-ear cress)).